A 601-amino-acid polypeptide reads, in one-letter code: Glutathione-regulated potassium-efflux system protein KefB (601 aa).

A run of 13 helical transmembrane segments spans residues 5–25 (DLLLAGILFLFAAVVAVPIAA), 29–49 (IGAVLGYLLAGIAIGPWGLGF), 55–75 (EILHFSELGVVFLMFLIGLEL), 87–107 (IFGIGAAQVLLSAVVLAGLLM), 115–135 (AAVVGGIGLAMSSTAMALQLM), 152–172 (VLLFQDLAVIPALAMVPLLAG), 181–201 (LKIGMKVLAFAVMLVGGRYLL), 207–227 (FIAGSGVREVFTAAALLLVLG), 230–250 (LFMDLLGLSMALGTFIAGILL), 268–288 (GLLLGLFFISVGMALNLGVLY), 291–311 (ILWVVMSVVVLVSVKMAVLYG), 324–344 (LPFAGVLSQGGEFAFVLFSSA), and 356–376 (ALLLVTVTLSMMTTPLVMKGI). The RCK N-terminal domain occupies 400–519 (KPQVIIVGFG…AGVKQFSRET (120 aa)).

The protein belongs to the monovalent cation:proton antiporter 2 (CPA2) transporter (TC 2.A.37) family. KefB subfamily. As to quaternary structure, interacts with the regulatory subunit KefG.

It localises to the cell inner membrane. Pore-forming subunit of a potassium efflux system that confers protection against electrophiles. Catalyzes K(+)/H(+) antiport. The chain is Glutathione-regulated potassium-efflux system protein KefB from Cronobacter sakazakii (strain ATCC BAA-894) (Enterobacter sakazakii).